The following is a 240-amino-acid chain: Caffeoyl-CoA O-methyltransferase 5 (240 aa).

Residue K14 coordinates substrate. S-adenosyl-L-methionine-binding positions include T56, E78, 80-81 (GV), S86, D104, and A133. Residue D156 participates in substrate binding. D156 contacts a divalent metal cation. Position 158 (D158) interacts with S-adenosyl-L-methionine. A divalent metal cation-binding residues include D182 and N183. N187 contacts substrate.

The protein belongs to the class I-like SAM-binding methyltransferase superfamily. Cation-dependent O-methyltransferase family. CCoAMT subfamily. Requires Mg(2+) as cofactor. In terms of tissue distribution, expression steadily increases from the bottom to the top of the plant.

It carries out the reaction (E)-caffeoyl-CoA + S-adenosyl-L-methionine = (E)-feruloyl-CoA + S-adenosyl-L-homocysteine + H(+). It functions in the pathway aromatic compound metabolism; phenylpropanoid biosynthesis. Functionally, methylates caffeoyl-CoA to feruloyl-CoA and 5-hydroxyferuloyl-CoA to sinapoyl-CoA. Plays a role in the synthesis of feruloylated polysaccharides. Involved in the reinforcement of the plant cell wall. Also involved in the responding to wounding or pathogen challenge by the increased formation of cell wall-bound ferulic acid polymers. Methylates 5-hydroxyferulolyl-CoA more efficiently than caffeoyl-CoA. The sequence is that of Caffeoyl-CoA O-methyltransferase 5 (CCOAOMT5) from Nicotiana tabacum (Common tobacco).